The following is a 523-amino-acid chain: UDP-glucuronosyltransferase 3A1 (523 aa).

A signal peptide spans 1–22; the sequence is MAGQQALLLFGFILPGLLFSEA. Residues 23–483 lie on the Extracellular side of the membrane; that stretch reads AKILTVSLVG…HAFQQPWYEQ (461 aa). N-linked (GlcNAc...) asparagine glycosylation occurs at asparagine 52. A helical membrane pass occupies residues 484 to 504; that stretch reads YLLDVFLFLLVVTLGTMWLCG. Over 505–523 the chain is Cytoplasmic; that stretch reads KLLGLVARWLCGARKLKKA.

The protein belongs to the UDP-glycosyltransferase family.

The protein localises to the membrane. It carries out the reaction glucuronate acceptor + UDP-alpha-D-glucuronate = acceptor beta-D-glucuronoside + UDP + H(+). Functionally, UDP-glucuronosyltransferases catalyze phase II biotransformation reactions in which lipophilic substrates are conjugated with glucuronic acid to increase water solubility and enhance excretion. They are of major importance in the conjugation and subsequent elimination of potentially toxic xenobiotics and endogenous compounds. In Bos taurus (Bovine), this protein is UDP-glucuronosyltransferase 3A1 (UGT3A1).